Reading from the N-terminus, the 658-residue chain is MNFDIVQRRLSLADDVVDSDSPMQEQDELPMTQIPGDSSANVLISTQVQSKLDEMELKKVMKKNLTQFAFESLGATESAPPSRAATPPAKATKRKKSTKAAGRTSTGTGKKRKRTPSSIKSITQFNTENYESLADNRRSRHVVSLLSGKKKKIKDIIDRLQVEDASGSPGPSKSHFSTYSPHEWSHILQLLKSKFPKCPPGQVEAVYKYVYGGAEKDNVWYSSQMPPSDPETQASQEFHYNAQQPMVFSLSQAVEEEFVDAESPALISESFGREQMKGPSFLDEQCISDTTDETGVELKIDEDVARAFRTRMLQPYWLREDVKMKEQPGVSGDKLMKSSSGAARPKEQRWLHLSYNGVDDATKNFPKSPTSTPEPRSGPQVLQRHTYRTPSGLAGRDQLIDLTQCSFNAVKSLISPLKSEVQVPATRTTTWNDKNHSRPQNYGALHQKVQLRLCGGIADSEIYSTLRSRQVVWRLQDFDLQDSEEETKYQLLELDFETVDSKVDLSTAPHHRLSVIKSPTSIASPGDLCDFEVSVKRNASVPPSLPLSAKNLRESLRAIGLKPARTRSEMAEQMGCASQHLIGENAQEQRQGLFDQFTHLVEQSPSLLEKVYTFEPLVLSELIDFLVQKDPFIDKIDDSTIKQWADQMGICLRSAAED.

Disordered stretches follow at residues 17–37 (VDSDSPMQEQDELPMTQIPGD), 74–123 (GATE…KSIT), and 327–383 (QPGV…QVLQ). Low complexity-rich tracts occupy residues 75–90 (ATESAPPSRAATPPAK) and 99–108 (KAAGRTSTGT). The span at 365-374 (FPKSPTSTPE) shows a compositional bias: polar residues.

Belongs to the SLX4 family. Forms a heterodimer with SLX1. In terms of processing, phosphorylated in response to DNA damage.

Its subcellular location is the nucleus. In terms of biological role, regulatory subunit of the SLX1-SLX4 structure-specific endonuclease that resolves DNA secondary structures generated during DNA repair and recombination. Has endonuclease activity towards branched DNA substrates, introducing single-strand cuts in duplex DNA close to junctions with ss-DNA. This is Structure-specific endonuclease subunit SLX4 from Lachancea thermotolerans (strain ATCC 56472 / CBS 6340 / NRRL Y-8284) (Yeast).